We begin with the raw amino-acid sequence, 154 residues long: Endoribonuclease YbeY (154 aa).

Positions 114, 118, and 124 each coordinate Zn(2+).

It belongs to the endoribonuclease YbeY family. Zn(2+) serves as cofactor.

It is found in the cytoplasm. Its function is as follows. Single strand-specific metallo-endoribonuclease involved in late-stage 70S ribosome quality control and in maturation of the 3' terminus of the 16S rRNA. The polypeptide is Endoribonuclease YbeY (Aggregatibacter actinomycetemcomitans (Actinobacillus actinomycetemcomitans)).